A 442-amino-acid polypeptide reads, in one-letter code: MKEQKKVFIKTLGCQMNEYDSARMHEVLNEHFDTVKTDDYKDADIILINTCSIREKAQEKVFHELGRWKGLKKTNEDLIIGVGGCVASQEGENIIKRAPFVDLVFGPQTIHRLPEMIKQKQKTQQSQVDISFPEVEKFDYLPEPKAEGAKAYVSIMEGCDKYCSYCVVPYTRGPEVNRPFEDVLAECAILAEQGVKEITLLGQNVNHYLGPMENGQTADLALLIHFIAEIDGIERIRFTTSHPVEFSQNLIDAYATVPELANHLHLPVQHGSDRILINMKRNHTILEFKQKIRKLRAIRPDITISSDFIVGFPGETEEDFQKLLDLVKEINFDQSFSFIYSKRPGTPAADLPDDTPMEVKKDRLKRLQDLLNSNAQIISRQMVGTNQRILVDGTSKKDDNILSGRTENNRVVNFKGDKSLIGQFAMVKITESLPNSLRGELI.

An MTTase N-terminal domain is found at 5–122 (KKVFIKTLGC…LPEMIKQKQK (118 aa)). Positions 14, 51, 85, 159, 163, and 166 each coordinate [4Fe-4S] cluster. Residues 145-378 (KAEGAKAYVS…DLLNSNAQII (234 aa)) form the Radical SAM core domain. One can recognise a TRAM domain in the interval 380 to 442 (RQMVGTNQRI…LPNSLRGELI (63 aa)).

The protein belongs to the methylthiotransferase family. MiaB subfamily. In terms of assembly, monomer. [4Fe-4S] cluster serves as cofactor.

It is found in the cytoplasm. The catalysed reaction is N(6)-dimethylallyladenosine(37) in tRNA + (sulfur carrier)-SH + AH2 + 2 S-adenosyl-L-methionine = 2-methylsulfanyl-N(6)-dimethylallyladenosine(37) in tRNA + (sulfur carrier)-H + 5'-deoxyadenosine + L-methionine + A + S-adenosyl-L-homocysteine + 2 H(+). Functionally, catalyzes the methylthiolation of N6-(dimethylallyl)adenosine (i(6)A), leading to the formation of 2-methylthio-N6-(dimethylallyl)adenosine (ms(2)i(6)A) at position 37 in tRNAs that read codons beginning with uridine. This chain is tRNA-2-methylthio-N(6)-dimethylallyladenosine synthase, found in Francisella tularensis subsp. tularensis (strain FSC 198).